We begin with the raw amino-acid sequence, 248 residues long: Large ribosomal subunit protein uL30B (248 aa).

Positions 1–45 (MSQKKQKIQVEQKVPENVAKKTQRDSKLRDAVAKRRTERLAANKT) are disordered. The span at 8-41 (IQVEQKVPENVAKKTQRDSKLRDAVAKRRTERLA) shows a compositional bias: basic and acidic residues.

Belongs to the universal ribosomal protein uL30 family.

Binds to G-rich structures in 28S rRNA and in mRNAs. Plays a regulatory role in the translation apparatus; inhibits cell-free translation of mRNAs. The sequence is that of Large ribosomal subunit protein uL30B (Rpl7-2) from Paramecium tetraurelia.